The chain runs to 81 residues: Photosystem I iron-sulfur center (81 aa).

2 consecutive 4Fe-4S ferredoxin-type domains span residues 1-31 and 39-68; these read MAHSVKIYDTCIGCTQCVRACPTDVLEMVPW and IASAPRTEDCVGCKRCESACPTDYLSVRVY. Residues C11, C14, C17, C21, C48, C51, C54, and C58 each contribute to the [4Fe-4S] cluster site.

In terms of assembly, the eukaryotic PSI reaction center is composed of at least 11 subunits. It depends on [4Fe-4S] cluster as a cofactor.

It is found in the plastid. Its subcellular location is the chloroplast thylakoid membrane. It catalyses the reaction reduced [plastocyanin] + hnu + oxidized [2Fe-2S]-[ferredoxin] = oxidized [plastocyanin] + reduced [2Fe-2S]-[ferredoxin]. In terms of biological role, apoprotein for the two 4Fe-4S centers FA and FB of photosystem I (PSI); essential for photochemical activity. FB is the terminal electron acceptor of PSI, donating electrons to ferredoxin. The C-terminus interacts with PsaA/B/D and helps assemble the protein into the PSI complex. Required for binding of PsaD and PsaE to PSI. PSI is a plastocyanin-ferredoxin oxidoreductase, converting photonic excitation into a charge separation, which transfers an electron from the donor P700 chlorophyll pair to the spectroscopically characterized acceptors A0, A1, FX, FA and FB in turn. The sequence is that of Photosystem I iron-sulfur center from Welwitschia mirabilis (Tree tumbo).